Consider the following 456-residue polypeptide: tRNA-2-methylthio-N(6)-dimethylallyladenosine synthase (456 aa).

In terms of domain architecture, MTTase N-terminal spans 6–125 (KRLFIKTYGC…LPELIAQAHR (120 aa)). [4Fe-4S] cluster is bound by residues cysteine 15, cysteine 51, cysteine 88, cysteine 163, cysteine 167, and cysteine 170. The region spanning 149 to 385 (QVEGYSAFVT…QELLSDQQAA (237 aa)) is the Radical SAM core domain. The TRAM domain maps to 388 to 450 (ESMIGRTLPV…RNSLSGSLTG (63 aa)).

The protein belongs to the methylthiotransferase family. MiaB subfamily. Monomer. [4Fe-4S] cluster is required as a cofactor.

It localises to the cytoplasm. The catalysed reaction is N(6)-dimethylallyladenosine(37) in tRNA + (sulfur carrier)-SH + AH2 + 2 S-adenosyl-L-methionine = 2-methylsulfanyl-N(6)-dimethylallyladenosine(37) in tRNA + (sulfur carrier)-H + 5'-deoxyadenosine + L-methionine + A + S-adenosyl-L-homocysteine + 2 H(+). Its function is as follows. Catalyzes the methylthiolation of N6-(dimethylallyl)adenosine (i(6)A), leading to the formation of 2-methylthio-N6-(dimethylallyl)adenosine (ms(2)i(6)A) at position 37 in tRNAs that read codons beginning with uridine. This Maricaulis maris (strain MCS10) (Caulobacter maris) protein is tRNA-2-methylthio-N(6)-dimethylallyladenosine synthase.